The primary structure comprises 337 residues: tRNA N6-adenosine threonylcarbamoyltransferase (337 aa).

Positions 111 and 115 each coordinate Fe cation. Residues 134–138, Asp-167, Gly-180, and Asn-272 each bind substrate; that span reads LVSGG. Residue Asp-300 participates in Fe cation binding.

The protein belongs to the KAE1 / TsaD family. It depends on Fe(2+) as a cofactor.

It localises to the cytoplasm. It catalyses the reaction L-threonylcarbamoyladenylate + adenosine(37) in tRNA = N(6)-L-threonylcarbamoyladenosine(37) in tRNA + AMP + H(+). In terms of biological role, required for the formation of a threonylcarbamoyl group on adenosine at position 37 (t(6)A37) in tRNAs that read codons beginning with adenine. Is involved in the transfer of the threonylcarbamoyl moiety of threonylcarbamoyl-AMP (TC-AMP) to the N6 group of A37, together with TsaE and TsaB. TsaD likely plays a direct catalytic role in this reaction. This Nitrosomonas europaea (strain ATCC 19718 / CIP 103999 / KCTC 2705 / NBRC 14298) protein is tRNA N6-adenosine threonylcarbamoyltransferase.